Here is a 153-residue protein sequence, read N- to C-terminus: Insulin-like growth factor 1 (153 aa).

The tract at residues 49 to 77 is b; it reads GPETLCGAELVDALQFVCGDRGFYFNKPT. 3 cysteine pairs are disulfide-bonded: Cys54–Cys96, Cys66–Cys109, and Cys95–Cys100. The interval 78 to 89 is c; it reads GYGSSSRRAPQT. The segment at 90-110 is a; it reads GIVDECCFRSCDLRRLEMYCA. Positions 111–118 are d; that stretch reads PLKPAKSA. The propeptide at 119–153 is e peptide; the sequence is RSVRAQRHTDMPKAQKEVHLKNASRGSAGNKNYRM. Residues 120-153 are disordered; that stretch reads SVRAQRHTDMPKAQKEVHLKNASRGSAGNKNYRM. Over residues 125-138 the composition is skewed to basic and acidic residues; sequence RHTDMPKAQKEVHL. Residues 142-153 show a composition bias toward polar residues; sequence SRGSAGNKNYRM.

It belongs to the insulin family. As to quaternary structure, forms a ternary complex with IGFR1 and ITGAV:ITGB3. Forms a ternary complex with IGFR1 and ITGA6:ITGB4. Forms a ternary complex with IGFBP3 and ALS.

The protein resides in the secreted. The insulin-like growth factors, isolated from plasma, are structurally and functionally related to insulin but have a much higher growth-promoting activity. May be a physiological regulator of [1-14C]-2-deoxy-D-glucose (2DG) transport and glycogen synthesis in osteoblasts. Stimulates glucose transport in bone-derived osteoblastic (PyMS) cells and is effective at much lower concentrations than insulin, not only regarding glycogen and DNA synthesis but also with regard to enhancing glucose uptake. May play a role in synapse maturation. Ca(2+)-dependent exocytosis of IGF1 is required for sensory perception of smell in the olfactory bulb. Acts as a ligand for IGF1R. Binds to the alpha subunit of IGF1R, leading to the activation of the intrinsic tyrosine kinase activity which autophosphorylates tyrosine residues in the beta subunit thus initiating a cascade of down-stream signaling events leading to activation of the PI3K-AKT/PKB and the Ras-MAPK pathways. Binds to integrins ITGAV:ITGB3 and ITGA6:ITGB4. Its binding to integrins and subsequent ternary complex formation with integrins and IGFR1 are essential for IGF1 signaling. Induces the phosphorylation and activation of IGFR1, MAPK3/ERK1, MAPK1/ERK2 and AKT1. As part of the MAPK/ERK signaling pathway, acts as a negative regulator of apoptosis in cardiomyocytes via promotion of STUB1/CHIP-mediated ubiquitination and degradation of ICER-type isoforms of CREM. This is Insulin-like growth factor 1 from Panthera tigris altaica (Siberian tiger).